A 356-amino-acid polypeptide reads, in one-letter code: DNA polymerase IV (356 aa).

A UmuC domain is found at 7 to 188 (IIHIDMDAFY…IPVTKFYGVG (182 aa)). The Mg(2+) site is built by Asp11 and Asp106. Residue Glu107 is part of the active site.

The protein belongs to the DNA polymerase type-Y family. As to quaternary structure, monomer. It depends on Mg(2+) as a cofactor.

It localises to the cytoplasm. The enzyme catalyses DNA(n) + a 2'-deoxyribonucleoside 5'-triphosphate = DNA(n+1) + diphosphate. Functionally, poorly processive, error-prone DNA polymerase involved in untargeted mutagenesis. Copies undamaged DNA at stalled replication forks, which arise in vivo from mismatched or misaligned primer ends. These misaligned primers can be extended by PolIV. Exhibits no 3'-5' exonuclease (proofreading) activity. May be involved in translesional synthesis, in conjunction with the beta clamp from PolIII. The chain is DNA polymerase IV from Listeria monocytogenes serotype 4b (strain CLIP80459).